The following is a 597-amino-acid chain: Arginine--tRNA ligase (597 aa).

Residues 124–134 carry the 'HIGH' region motif; that stretch reads PNVAKPLHVGH.

This sequence belongs to the class-I aminoacyl-tRNA synthetase family. As to quaternary structure, monomer.

Its subcellular location is the cytoplasm. It catalyses the reaction tRNA(Arg) + L-arginine + ATP = L-arginyl-tRNA(Arg) + AMP + diphosphate. This Agathobacter rectalis (strain ATCC 33656 / DSM 3377 / JCM 17463 / KCTC 5835 / VPI 0990) (Eubacterium rectale) protein is Arginine--tRNA ligase.